The primary structure comprises 314 residues: Malate dehydrogenase (314 aa).

9–15 (IGVGNVG) contacts NAD(+). Residues arginine 84 and arginine 90 each coordinate substrate. NAD(+) is bound by residues asparagine 97 and 120–122 (ISN). Substrate is bound by residues asparagine 122 and arginine 153. Histidine 177 functions as the Proton acceptor in the catalytic mechanism.

The protein belongs to the LDH/MDH superfamily.

The enzyme catalyses (S)-malate + NAD(+) = oxaloacetate + NADH + H(+). In terms of biological role, catalyzes the reversible oxidation of malate to oxaloacetate. This is Malate dehydrogenase from Aliarcobacter butzleri (strain RM4018) (Arcobacter butzleri).